The sequence spans 151 residues: MNNEILQRMVENLSEEKFGRTFQHRAYFNKRLRTTGGRYLLKSHDIEINPKQYEHYGEDAVVKIILHELCHYHLHIAGKGYQHKDQDFKRLSQQVGAPRFCNSIESYQQRANYEYYCTKCHAKYIRIRKVDTNRMRCGHCNGKLRMKRQLK.

One can recognise a SprT-like domain in the interval 6-147; the sequence is LQRMVENLSE…GHCNGKLRMK (142 aa). Residue H67 participates in Zn(2+) binding. E68 is an active-site residue. A Zn(2+)-binding site is contributed by H71.

Belongs to the SprT family. Zn(2+) serves as cofactor.

The protein localises to the cytoplasm. This is Protein SprT-like from Staphylococcus aureus (strain MRSA252).